Reading from the N-terminus, the 174-residue chain is Calcineurin subunit B (174 aa).

4 consecutive EF-hand domains span residues 21-56 (EEIE…ASNP), 60-88 (RLFS…FSVH), 90-125 (NKEE…MVGT), and 131-166 (QLQQ…SNVT). The Ca(2+) site is built by D34, N36, S38, S40, E45, D66, D68, D72, E77, D103, D105, D107, Y109, E114, D144, D146, D148, K150, and E155.

The protein belongs to the calcineurin regulatory subunit family. In terms of assembly, composed of a catalytic subunit (A) and a regulatory subunit (B).

Regulatory subunit of calcineurin, a calcium-dependent, calmodulin stimulated protein phosphatase. Confers calcium sensitivity. The protein is Calcineurin subunit B (cnb1) of Schizosaccharomyces pombe (strain 972 / ATCC 24843) (Fission yeast).